Reading from the N-terminus, the 179-residue chain is MSKQNTYRLINPYIEGTTDTVVHSSNSFKAGKKLYGGISGYFTNHLDNFHMTIQNVQTGGLTHFRILEQRKNDGTVDYKLEKIDGEFSPDVDNKLLSSVAKLEQQKGGGSNDSSDSSDSETECFKFPLQPINRFVYFYLPYHKLNLVGLSPVDISRIFMPTFGFPFNPTIEIRFDLYKY.

The protein localises to the virion. This is an uncharacterized protein from Acanthamoeba polyphaga (Amoeba).